Here is an 85-residue protein sequence, read N- to C-terminus: MEEDRGIADPPLDSLLSRSGSKYGLVIYAAKRARQIDQYYIDLHEGSFYAHVGPLVSVDADDKSLTVAMREIAEDKLDLKSSAAE.

The protein belongs to the RNA polymerase subunit omega family. The RNAP catalytic core consists of 2 alpha, 1 beta, 1 beta' and 1 omega subunit. When a sigma factor is associated with the core the holoenzyme is formed, which can initiate transcription.

The enzyme catalyses RNA(n) + a ribonucleoside 5'-triphosphate = RNA(n+1) + diphosphate. In terms of biological role, promotes RNA polymerase assembly. Latches the N- and C-terminal regions of the beta' subunit thereby facilitating its interaction with the beta and alpha subunits. This chain is DNA-directed RNA polymerase subunit omega, found in Tropheryma whipplei (strain TW08/27) (Whipple's bacillus).